A 187-amino-acid chain; its full sequence is Adenylate kinase (187 aa).

Position 10 to 15 (10 to 15 (GSGKGT)) interacts with ATP. An NMP region spans residues 30–59 (STGDMLRAEIAAGTELGKQAKTVMDAGNLV). AMP is bound by residues Thr31, Arg36, 57-59 (NLV), 85-88 (GYPR), and Gln92. The LID stretch occupies residues 126–136 (GRAKEQGRADD). An ATP-binding site is contributed by Arg127. AMP-binding residues include Arg133 and Arg144. Residue Gly172 participates in ATP binding.

It belongs to the adenylate kinase family. In terms of assembly, monomer.

It is found in the cytoplasm. The enzyme catalyses AMP + ATP = 2 ADP. The protein operates within purine metabolism; AMP biosynthesis via salvage pathway; AMP from ADP: step 1/1. Its function is as follows. Catalyzes the reversible transfer of the terminal phosphate group between ATP and AMP. Plays an important role in cellular energy homeostasis and in adenine nucleotide metabolism. This chain is Adenylate kinase, found in Stenotrophomonas maltophilia (strain K279a).